Reading from the N-terminus, the 224-residue chain is uncharacterized protein (224 aa).

Residues 2 to 221 (IEAKNVWKIY…KLRDGEIVEI (220 aa)) form the ABC transporter domain. 38 to 45 (GPSGCGKS) serves as a coordination point for ATP.

The protein belongs to the ABC transporter superfamily.

This is an uncharacterized protein from Methanocaldococcus jannaschii (strain ATCC 43067 / DSM 2661 / JAL-1 / JCM 10045 / NBRC 100440) (Methanococcus jannaschii).